A 131-amino-acid chain; its full sequence is Holo-[acyl-carrier-protein] synthase (131 aa).

Residues Asp-8 and Glu-59 each coordinate Mg(2+).

The protein belongs to the P-Pant transferase superfamily. AcpS family. Mg(2+) is required as a cofactor.

It localises to the cytoplasm. The enzyme catalyses apo-[ACP] + CoA = holo-[ACP] + adenosine 3',5'-bisphosphate + H(+). Its function is as follows. Transfers the 4'-phosphopantetheine moiety from coenzyme A to a Ser of acyl-carrier-protein. The chain is Holo-[acyl-carrier-protein] synthase from Rickettsia massiliae (strain Mtu5).